The chain runs to 128 residues: Small ribosomal subunit protein uS14m (128 aa).

The protein belongs to the universal ribosomal protein uS14 family. In terms of assembly, component of the mitochondrial ribosome small subunit (28S) which comprises a 12S rRNA and about 30 distinct proteins. Interacts with LIAT1.

The protein localises to the mitochondrion. The protein is Small ribosomal subunit protein uS14m (Mrps14) of Mus musculus (Mouse).